Here is a 20-residue protein sequence, read N- to C-terminus: Toxin CpTx-4a (20 aa).

This sequence belongs to the spider toxin CSTX family. In terms of tissue distribution, expressed by the venom gland.

Its subcellular location is the secreted. Functionally, spider venom toxin that exhibits cytolytic activity by forming an alpha-helix across the membrane. Lethal to insect larvae. The polypeptide is Toxin CpTx-4a (Cheiracanthium punctorium (Yellow sac spider)).